A 227-amino-acid polypeptide reads, in one-letter code: MAEKQTLIDAINDRFNSQIEAVVAGVDMVTIELLPTHLLEVCTALRDDPPFNFELLLDVCGVDYLEYGMSPWRTEETPNTGFSRGFEEVIQEQIIPWNKPRFAVVYHLLSLRHNHRIRLKTYVEGDPPLVPSVIKIWSSADWYEREAFDLYGIVFEGHPDLRRLLTDYGFVGHPFRKDFPLIGEVELRYDAAQQRCVYEPVSIQPRVLVPKVIRVDSRYEKGEKENG.

The protein belongs to the complex I 30 kDa subunit family. In terms of assembly, NDH-1 is composed of 14 different subunits. Subunits NuoB, C, D, E, F, and G constitute the peripheral sector of the complex.

The protein localises to the cell inner membrane. The catalysed reaction is a quinone + NADH + 5 H(+)(in) = a quinol + NAD(+) + 4 H(+)(out). Its function is as follows. NDH-1 shuttles electrons from NADH, via FMN and iron-sulfur (Fe-S) centers, to quinones in the respiratory chain. The immediate electron acceptor for the enzyme in this species is believed to be ubiquinone. Couples the redox reaction to proton translocation (for every two electrons transferred, four hydrogen ions are translocated across the cytoplasmic membrane), and thus conserves the redox energy in a proton gradient. The sequence is that of NADH-quinone oxidoreductase subunit C from Coxiella burnetii (strain Dugway 5J108-111).